A 3262-amino-acid polypeptide reads, in one-letter code: MQKARGTRGEDAGTRAPPSPGVPPKRAKVGAGRGVLVTGDGAGAPVFLRPLKNAAVCAGSDVRLRVVVSGTPQPSLSWFRDGQLLPPPAPEPSCLWLRSCGAQDAGVYSCSAQNERGQASCEAVLTVLEVRDSETAEDDISDVPGTQRLELRDDRAFSTPTGGSDTLVGTSLDTPPTSVTGTSEEQVSWWGSGQTVLEQEAGSGGGTRPLPGSPRQAQTTGAGPRHLGVEPLVRASRANLVGASWGSEDSLSVASDLYGSAFSLYRGRALSIHVSIPPSGLHREEPDLQPQPASDALRPRPALPPPSKSALLPPPSPRVGKRALPGPSTQPPATPTSPHRRAQEPSLPEDITTTEEKRGKKPKSSGPSLAGTVESRPQTPLSEASGRLSALGRSPRLVRAGSRILDKLQFFEERRRSLERSDSPPAPLRPWVPLRKARSLEQPKSEGGAAWGTPEASQEELRSPRGSVAERRRLFQQKAASLDERTRQRSATSDLELRFAQELGRIRRSTSREELVRSHESLRATLQRAPSPREPGEPPLFSRPSTPKTSRAVSPAATQPPPPSGAGKSGDEPGRPRSRGPVGRTEPGEGPQQEIKRRDQFPLTRSRAIQECRSPVPPYTADPPESRTKAPSGRKREPPAQAVRFLPWATPGVEDSVLPQTLEKNRAGPEAEKRLRRGPEEDGPWGPWDRRGTRSQGKGRRARPTSPELESSDDSYVSAGEEPLEAPVFEIPLQNMVVAPGADVLLKCIITANPPPQVSWKKDGSMLHSEGRLLIRAEGERHTLLLREAQAADAGSYTATATNELGQATCASSLAVRPGGSTSPFSSPITSDEEYLSPPEEFPEPGETWPRTPTMKLSPSQDHDSSDSSSKAPPTFKVSLMDQSVREGQDVIMSIRVQGEPKPVVSWLRNRQPVRPDQRRFAEEAEGGLCRLRILAAERGDAGFYTCKAVNEYGARQCEARLEVRAHPESRSLAVLAPLQDVDVGAGEMALFECLVAGPADVEVDWLCRGRLLQPALLKCKMHFDGRKCKLLLTSVHEDDSGVYTCKLSTAKDELTCSARLTVRPSLAPLFTRLLEDVEVLEGRAARLDCKISGTPPPSVTWTHFGHPVNEGDNLRLRQDGGLHSLHIARVGSEDEGLYEVSATNTHGQAHCSAQLYVEEPRTAASGPSSKLEKMPSIPEEPEHGDLERLSIPDFLRPLQDLEVGLAKEAMLECQVTGLPYPTISWFHNGHRIQSSDDRRMTQYRDIHRLVFPAVGPQHAGVYKSVIANKLGKAACYAHLYVTDVVPGPPDGAPEVVAVTGRMVTLSWNPPRSLDMAIDPDSLTYTVQHQVLGSDQWTALVTGLREPAWAATGLKKGIQHIFRVLSSSGKSSSKPSAPSEPVQLLEHGPPLEEAPAVLDKQDIVYVVEGQPACVTVTFNHVEAQVVWRSCRGALLEARTGVYELSQPDDDQYCLRICRVSRRDLGPLTCSARNRHGTKACSVTLELAEAPRFESIMEDVEVGPGETARFAVVVEGKPLPDIMWYKDEVLLAESNHVSFVYEENECSLVLLSAGSQDGGVYTCTARNLAGEVSCKAELSVLSAQTAMEVEGVGEDEEHRGRRLSDYYDIHQEIGRGAFSYLRRVVERSSGLEFAAKFIPSQAKPKASARREARLLARLQHGCVLYFHEAFERRRGLVIVTELCTEELLERMARKPTVCESETRTYMRQVLEGICYLHQSHVLHLDVKPENLLVWDGAGGEEQVRICDFGNAQELTPGEPQYCQYGTPEFVAPEIVNQSPVSGVTDIWPVGVVAFLCLTGISPFVGENDRTTLMNIRNYNVAFEETTFLSLSREARGFLIKVLVQDRLRPTAEETLEHPWFKTEAKGAEVSTDHLKLFLSRRRWQRSQISYKCHLVLRPIPELLRAPPERVWVAMPRRQPPSGGLSSSSDSEEEELEELPSVPRPLQPEFSGSRVSLTDIPTEDEALGTPEAGAATPMDWQEQERTPSKDQEAPSPEALPSPGQESPDGPSPRRPELRRGSSAESALPRVGSREPGRSLHKAASVELPQRRSPSPGATRLTRGGLGEGEYAQRLQALRQRLLRGGPEDGKVSGLRGPLLESLGGRARDPRMARAASSEAAPHHQPPPESRGLQKSSSFSQGEAEPRGRHRRAGAPLEIPVARLGARRLQESPSLSALSETQPPSPARPSVPKLSITKSPEPSAVTSRDSPQPPEPQPVPEKVPEPKPEPVRAAKPAQPPLALQMPTQPLTPYAQIMQSLQLSSPTLSPQDPAVPPSEPKPHAAVFARVASPPPGVSEKRVPSARTPPVLAEKARVPTVPPRPGSSLSGSIENLESEAVFEAKFKRSRESPLSRGLRLLSRSRSEERGPFRGAEDDGIYRPSPAGTPLELVRRPERSRSVQDLRVAGEPGLVRRLSLSLSQKLRRTPPGQRHPAWESRSGDGESSEGGSSARASPVLAVRRRLSSTLERLSSRLQRSGSSEDSGGASGRSTPLFGRLRRATSEGESLRRLGVPHNQLGSQTGATTPSAESLGSEASGTSGSSAPGESRSRHRWGLSRLRKDKGLSQPNLSSSVQEDLGHQYVPSESDFPPVFHIKLKDQVLLEGEAATLLCLPAACPAPRISWMKDKQSLRSEPSVVIVSCKDGRQLLSIPRAGKRHAGLYECSATNVLGSITSSCTVAVARIPGKLAPPEVPQTYHDTALVVWKPGDGRAPCTYTLERRVDGESVWHPVSSGIPDCYYNVTQLPVGVTVRFRVACSNRAGQGPFSNPSEKVFIRGTPDSPAQPAAAPRDAPVTSGPTRAPPPDSPTSLAPTPALAPPASQASTLSPSTSSMSANQALSSLKAVGPPPATPPRKHRGLLATQQAEPSPPSIVVTPSEPRSFVPDTGTLTPTSSPQGVKPAPSSTSLYMVTSFVSAPPAPQAPAPEPPPEPTKVTVRSLSPAKEVVSSPTPESTTLRQGPPQKPYTFLEEKARGRFGVVRSCRENATGRTFVAKIVPYAAEGKRRVLQEYEVLRTLHHERLMSLHEAYITPRYLVLIAESCGNRELLCGLSDRFRYSEDDVATYVVQLLQGLDYLHGHHVLHLDIKPDNLLLAADNALKIVDFGSAQPYNPQALKPLGHRTGTLEFMAPEMVKGDPIGSATDIWGAGVLTYIMLSGYSPFYEPDPQETEARIVGGRFDAFQLYPNTSQSATLFLRKVLSVHPWSRPSLQDCLAHPWLQDAYLMKLRRQTLTFTTNRLKEFLGEQRRRRAEAATRHKVLLRSYPGSP.

The interval M1 to R33 is disordered. R33 bears the Omega-N-methylarginine mark. Residues P45 to T126 enclose the Ig-like 1 domain. A Phosphoserine modification is found at S141. 4 disordered regions span residues R155–E185, E198–H226, G280–G720, and L814–T875. The segment covering S158–E185 has biased composition (polar residues). Over residues P301 to P317 the composition is skewed to pro residues. Residues S368 and S375 each carry the phosphoserine modification. T379 carries the phosphothreonine modification. A phosphoserine mark is found at S382 and S385. The span at I404–D422 shows a compositional bias: basic and acidic residues. S423 is subject to Phosphoserine. Residue T453 is modified to Phosphothreonine. A phosphoserine mark is found at S457, S463, S493, S511, and S531. Residues E459–R473 show a composition bias toward basic and acidic residues. Over residues T510–L522 the composition is skewed to basic and acidic residues. Positions R543 to A552 are enriched in polar residues. A Phosphoserine modification is found at S554. 2 stretches are compositionally biased toward basic and acidic residues: residues P624–P638 and E663–E680. The Ig-like 2 domain occupies P727–A815. Over residues G820–T830 the composition is skewed to polar residues. Ig-like domains lie at P874–E963, P968–T1062, and P1069–Y1157. A disulfide bridge links C994 with C1046. A phosphoserine mark is found at S1133 and S1177. A disordered region spans residues R1162–G1185. The region spanning P1193–T1283 is the Ig-like 6 domain. Positions P1290–H1387 constitute a Fibronectin type-III 1 domain. Ig-like domains lie at P1389 to E1485 and P1490 to S1578. A disulfide bridge connects residues C1413 and C1469. The Protein kinase 1 domain maps to Y1606 to F1859. Residues I1612 to L1620 and K1635 each bind ATP. D1724 acts as the Proton acceptor in catalysis. The tract at residues M1913–Q2571 is disordered. A compositionally biased stretch (low complexity) spans P1918–S1927. Over residues E1980–E1990 the composition is skewed to basic and acidic residues. Phosphoserine is present on residues S1993, S2004, S2019, S2020, and S2042. Residues S2009 to S2019 are compositionally biased toward basic and acidic residues. R2060 carries the asymmetric dimethylarginine; alternate modification. R2060 carries the omega-N-methylarginine; alternate modification. The span at A2069–R2081 shows a compositional bias: low complexity. Residues S2114 and S2135 each carry the phosphoserine modification. R2144 carries the omega-N-methylarginine modification. Positions E2168–Q2179 are enriched in polar residues. Residues S2182 and S2207 each carry the phosphoserine modification. Positions I2193–S2207 are enriched in polar residues. A compositionally biased stretch (pro residues) spans P2208–E2218. A compositionally biased stretch (basic and acidic residues) spans K2219–R2229. Residues A2230 to D2268 show a composition bias toward low complexity. Basic and acidic residues predominate over residues F2337–P2348. The span at L2349–R2358 shows a compositional bias: low complexity. Residues S2359–I2375 are compositionally biased toward basic and acidic residues. S2379 is modified (phosphoserine). At T2383 the chain carries Phosphothreonine. Residues L2387 to Q2398 are compositionally biased toward basic and acidic residues. Residues S2413, S2417, S2441, S2442, S2447, and S2451 each carry the phosphoserine modification. The segment covering S2461–S2487 has biased composition (low complexity). Residues Q2513–P2523 show a composition bias toward polar residues. Phosphoserine occurs at positions 2524 and 2527. A compositionally biased stretch (low complexity) spans S2524–E2543. A compositionally biased stretch (basic residues) spans S2546 to K2557. S2562 bears the Phosphoserine mark. Over residues S2562–Q2571 the composition is skewed to polar residues. An Ig-like 9 domain is found at P2586–A2676. An intrachain disulfide couples C2608 to C2660. In terms of domain architecture, Fibronectin type-III 2 spans K2683 to S2777. 3 disordered regions span residues R2756 to N2832, A2857 to S2899, and A2912 to P2960. T2774 bears the Phosphothreonine mark. Low complexity-rich tracts occupy residues P2775 to P2789 and P2803 to A2831. S2777 is modified (phosphoserine). Residues P2865–A2968 form the Fibronectin type-III 3 domain. Residues G2883–S2899 are compositionally biased toward polar residues. Positions P2913–P2927 are enriched in pro residues. Residues S2943–R2953 show a composition bias toward polar residues. Residue S2944 is modified to Phosphoserine. The Protein kinase 2 domain maps to T2946–L3213. Catalysis depends on D3080, which acts as the Proton acceptor.

The protein belongs to the protein kinase superfamily. CAMK Ser/Thr protein kinase family. In terms of assembly, interacts with MTM1. Isoform 3 is found as a monomer or homodimer. May be autophosphorylated. As to expression, isoform 1 is preferentially expressed in striated muscle. Non-kinase form such as isoform 3 is predominantly expressed in the aorta. Isoform 3 appears to be expressed only in highly differentiated ASMC in normal vessel walls and down-regulated in dedifferentiated ASMC in vivo. In response to vascular injuries ASMC dedifferentiate and change from a quiescent and contractile phenotype to a proliferative and synthetic phenotype. This proliferation of vascular smooth muscle cells is one of the most prominent features of atherosclerosis. Isoform 1 and isoform 4 are expressed in cardiomyocytes of the developing heart.

The protein resides in the nucleus. The enzyme catalyses L-seryl-[protein] + ATP = O-phospho-L-seryl-[protein] + ADP + H(+). It carries out the reaction L-threonyl-[protein] + ATP = O-phospho-L-threonyl-[protein] + ADP + H(+). Isoform 3 may have a role in regulating the growth and differentiation of arterial smooth muscle cells. This chain is Striated muscle-specific serine/threonine-protein kinase (Speg), found in Mus musculus (Mouse).